Here is a 494-residue protein sequence, read N- to C-terminus: 4-trimethylaminobutyraldehyde dehydrogenase (494 aa).

The residue at position 2 (serine 2) is an N-acetylserine. Residue lysine 30 is modified to N6-acetyllysine; alternate. Position 30 is an N6-succinyllysine; alternate (lysine 30). Lysine 59 bears the N6-succinyllysine mark. Residues lysine 180 and 232 to 236 (GSVPT) contribute to the NAD(+) site. Glutamate 254 serves as the catalytic Proton acceptor. Cysteine 288 acts as the Nucleophile in catalysis. Lysine 298 is subject to N6-acetyllysine. Glutamate 391 lines the NAD(+) pocket.

Belongs to the aldehyde dehydrogenase family. In terms of assembly, homotetramer. As to expression, detected in lever (at protein level).

It localises to the cytoplasm. The protein resides in the cytosol. It carries out the reaction 4-(trimethylamino)butanal + NAD(+) + H2O = 4-(trimethylamino)butanoate + NADH + 2 H(+). The enzyme catalyses an aldehyde + NAD(+) + H2O = a carboxylate + NADH + 2 H(+). The catalysed reaction is 4-aminobutanal + NAD(+) + H2O = 4-aminobutanoate + NADH + 2 H(+). It catalyses the reaction formaldehyde + NAD(+) + H2O = formate + NADH + 2 H(+). It carries out the reaction acetaldehyde + NAD(+) + H2O = acetate + NADH + 2 H(+). The enzyme catalyses imidazole-4-acetaldehyde + NAD(+) + H2O = imidazole-4-acetate + NADH + 2 H(+). The catalysed reaction is acrolein + NAD(+) + H2O = acrylate + NADH + 2 H(+). It catalyses the reaction (5-hydroxyindol-3-yl)acetaldehyde + NAD(+) + H2O = (5-hydroxyindol-3-yl)acetate + NADH + 2 H(+). It carries out the reaction 3,4-dihydroxyphenylacetaldehyde + NAD(+) + H2O = 3,4-dihydroxyphenylacetate + NADH + 2 H(+). The enzyme catalyses spermine monoaldehyde + NAD(+) + H2O = N-(2-carboxyethyl)spermidine + NADH + 2 H(+). The catalysed reaction is propanal + NAD(+) + H2O = propanoate + NADH + 2 H(+). It catalyses the reaction butanal + NAD(+) + H2O = butanoate + NADH + 2 H(+). It carries out the reaction pentanal + NAD(+) + H2O = pentanoate + NADH + 2 H(+). The enzyme catalyses hexanal + NAD(+) + H2O = hexanoate + NADH + 2 H(+). It functions in the pathway amine and polyamine biosynthesis; carnitine biosynthesis. Converts gamma-trimethylaminobutyraldehyde into gamma-butyrobetaine with high efficiency (in vitro). Can catalyze the irreversible oxidation of a broad range of aldehydes to the corresponding acids in an NAD-dependent reaction, but with low efficiency. Catalyzes the oxidation of aldehydes arising from biogenic amines and polyamines. This Rattus norvegicus (Rat) protein is 4-trimethylaminobutyraldehyde dehydrogenase (Aldh9a1).